The primary structure comprises 541 residues: Protein MGF 505-10R (541 aa).

This sequence belongs to the asfivirus MGF 505 family.

Functionally, plays a role in virus cell tropism, and may be required for efficient virus replication in macrophages. This Ornithodoros (relapsing fever ticks) protein is Protein MGF 505-10R.